Here is a 245-residue protein sequence, read N- to C-terminus: 1-(5-phosphoribosyl)-5-[(5-phosphoribosylamino)methylideneamino] imidazole-4-carboxamide isomerase (245 aa).

D7 (proton acceptor) is an active-site residue. D129 (proton donor) is an active-site residue.

Belongs to the HisA/HisF family.

Its subcellular location is the cytoplasm. It carries out the reaction 1-(5-phospho-beta-D-ribosyl)-5-[(5-phospho-beta-D-ribosylamino)methylideneamino]imidazole-4-carboxamide = 5-[(5-phospho-1-deoxy-D-ribulos-1-ylimino)methylamino]-1-(5-phospho-beta-D-ribosyl)imidazole-4-carboxamide. It functions in the pathway amino-acid biosynthesis; L-histidine biosynthesis; L-histidine from 5-phospho-alpha-D-ribose 1-diphosphate: step 4/9. The protein is 1-(5-phosphoribosyl)-5-[(5-phosphoribosylamino)methylideneamino] imidazole-4-carboxamide isomerase of Klebsiella pneumoniae subsp. pneumoniae (strain ATCC 700721 / MGH 78578).